The primary structure comprises 22 residues: KNWAVLVAGSDGLPNYRHHADV.

It belongs to the peptidase C13 family.

The enzyme catalyses Hydrolysis of proteins and small molecule substrates at -Asn-|-Xaa- bonds.. The protein is Hemoglobinase-like protein 2 of Fasciola hepatica (Liver fluke).